Reading from the N-terminus, the 610-residue chain is Zinc metalloproteinase-disintegrin-like bothropasin (610 aa).

The N-terminal stretch at methionine 1 to serine 20 is a signal peptide. A propeptide spanning residues isoleucine 21–glutamine 191 is cleaved from the precursor. Glutamine 192 carries the post-translational modification Pyrrolidone carboxylic acid. The region spanning arginine 198 to proline 394 is the Peptidase M12B domain. Positions 201 and 285 each coordinate Ca(2+). 3 disulfide bridges follow: cysteine 309/cysteine 389, cysteine 349/cysteine 373, and cysteine 351/cysteine 356. Position 334 (histidine 334) interacts with Zn(2+). Glutamate 335 is an active-site residue. Histidine 338 and histidine 344 together coordinate Zn(2+). An N-linked (GlcNAc...) asparagine glycan is attached at asparagine 372. Ca(2+) is bound by residues cysteine 389, asparagine 392, valine 404, asparagine 407, leucine 409, glutamate 411, glutamate 414, and aspartate 417. The Disintegrin domain occupies proline 402–asparagine 488. Cystine bridges form between cysteine 405-cysteine 424, cysteine 405-cysteine 434, cysteine 416-cysteine 429, cysteine 416-cysteine 434, cysteine 418-cysteine 424, cysteine 428-cysteine 451, cysteine 442-cysteine 448, cysteine 447-cysteine 473, cysteine 460-cysteine 480, cysteine 467-cysteine 492, cysteine 467-cysteine 499, cysteine 492-cysteine 504, cysteine 499-cysteine 504, cysteine 511-cysteine 526, cysteine 511-cysteine 561, cysteine 526-cysteine 572, cysteine 539-cysteine 549, cysteine 549-cysteine 556, cysteine 556-cysteine 598, cysteine 561-cysteine 572, cysteine 592-cysteine 603, and cysteine 598-cysteine 603. A D/ECD-tripeptide motif is present at residues glutamate 466 to aspartate 468. Ca(2+) is bound by residues aspartate 468, proline 469, glutamate 471, aspartate 483, and valine 484.

Belongs to the venom metalloproteinase (M12B) family. P-III subfamily. P-IIIb sub-subfamily. As to quaternary structure, monomer. Zn(2+) is required as a cofactor. Expressed by the venom gland.

Its subcellular location is the secreted. The enzyme catalyses Cleavage of 5-His-|-Leu-6, 10-His-|-Leu-11, 14-Ala-|-Leu-15, 16-Tyr-|-Leu-17 and 24-Phe-|-Phe-25 in insulin B chain.. Its activity is regulated as follows. Inhibited by EDTA and EGTA. Its function is as follows. Has caseinolytic activity. Causes hemorrhage on rabbit skin and causes myonecrosis in mouse tibialis anterior muscle. Functionally, inhibits platelet aggregation. The chain is Zinc metalloproteinase-disintegrin-like bothropasin from Bothrops jararaca (Jararaca).